The following is a 115-amino-acid chain: MDIMKKIELEHLRMDLPKFRSGDTVKVHLRIVEGEKERIQMFQGNVIRIHRGTTGGTFTVRKVSDGVGVERVFPLHSPFIDRVELITEGRVRRSRLYYLRDLRGKAARIKPKNRF.

It belongs to the bacterial ribosomal protein bL19 family.

Functionally, this protein is located at the 30S-50S ribosomal subunit interface and may play a role in the structure and function of the aminoacyl-tRNA binding site. This Nitratidesulfovibrio vulgaris (strain ATCC 29579 / DSM 644 / CCUG 34227 / NCIMB 8303 / VKM B-1760 / Hildenborough) (Desulfovibrio vulgaris) protein is Large ribosomal subunit protein bL19.